A 684-amino-acid chain; its full sequence is MPSIRAPLALTSFLLSLSGKPSTCVRSGLAANSRPWFGSIAGRNRVLANAPWWGGKAELSTDNSVVSGGKEENVDLKQYPPHLIRNFSIIAHVDHGKSTLADRLLELTGTIRKGHGQPQFLDKLQVERERGITVKAQTATMFYNYRSKKTGGANERFLLNLIDTPGHVDFSYEVSRSLAACQGVLLLVDAAQGVQAQTVANFYLAFESDLAIIPVINKIDQINADPEGVKSQLKQIFDIDPESVLLTSAKTGLGLENILPAVIERIPQPKGLVDASLRMLLLDSYYDEYRGVICHVAVVDGVLKRGDKIESAATRQSYEIMEVGILYPELTNTGILLTGQVGYVVTGMRSTKEARIGDTLFHTRSVVEPLPGFKPARHMVFAGVYPADGSDYEALSSAVERLTCNDASVSIAKETSGALGIGFRCGFLGLLHMDVFHQRLEQEHGAQVITTTPTVPYIFEYSDGSKLTIQNPAALPSNPKSRLVACYEPTVMATIITPSEYVGSLMTLCSERRGQQTEYSFIDGQRAMLKYRMPLREVVIDFYNELKSITSGYASFDYEEAPYQESDLVKLDILLNGQPVDALASICHRSKAHYVGRELCEKLKKVLDRQMFEVAIQAAIGAKVVARETLPALRKNVLAKCYGGDVSRKRKLLEKQKEGKKRMKRVGNVDIPQEAFHSLLKTGN.

Residues His-82 to Lys-270 enclose the tr-type G domain. Residues Ala-91–Ser-98, Asp-163–His-167, and Asn-217–Asp-220 each bind GTP.

Belongs to the TRAFAC class translation factor GTPase superfamily. Classic translation factor GTPase family. LepA subfamily.

The protein localises to the mitochondrion inner membrane. It carries out the reaction GTP + H2O = GDP + phosphate + H(+). Functionally, promotes mitochondrial protein synthesis. May act as a fidelity factor of the translation reaction, by catalyzing a one-codon backward translocation of tRNAs on improperly translocated ribosomes. Binds to mitochondrial ribosomes in a GTP-dependent manner. The polypeptide is Translation factor GUF1 homolog, mitochondrial (Physcomitrium patens (Spreading-leaved earth moss)).